Consider the following 297-residue polypeptide: Small ribosomal subunit protein uS2 (297 aa).

The interval 252 to 297 is disordered; the sequence is GVPGTAFSAATAAPTSWEADGGDWAASSAAPAGESWAETQPAEAKW. Positions 256 to 289 are enriched in low complexity; sequence TAFSAATAAPTSWEADGGDWAASSAAPAGESWAE.

This sequence belongs to the universal ribosomal protein uS2 family. Component of the small ribosomal subunit. Mature ribosomes consist of a small (40S) and a large (60S) subunit. The 40S subunit contains about 33 different proteins and 1 molecule of RNA (18S). The 60S subunit contains about 49 different proteins and 3 molecules of RNA (25S, 5.8S and 5S). Interacts with rps21.

It is found in the cytoplasm. Functionally, required for the assembly and/or stability of the 40S ribosomal subunit. Required for the processing of the 20S rRNA-precursor to mature 18S rRNA in a late step of the maturation of 40S ribosomal subunits. In Aspergillus fumigatus (strain CBS 144.89 / FGSC A1163 / CEA10) (Neosartorya fumigata), this protein is Small ribosomal subunit protein uS2 (rps0).